We begin with the raw amino-acid sequence, 536 residues long: Membrane protein insertase YidC (536 aa).

4 helical membrane-spanning segments follow: residues 5 to 25 (LIIA…IFPT), 353 to 373 (GNYG…FFPL), 418 to 438 (VNPL…FGLY), and 495 to 515 (MLML…GLVI).

It belongs to the OXA1/ALB3/YidC family. Type 1 subfamily. In terms of assembly, interacts with the Sec translocase complex via SecD. Specifically interacts with transmembrane segments of nascent integral membrane proteins during membrane integration.

Its subcellular location is the cell inner membrane. In terms of biological role, required for the insertion and/or proper folding and/or complex formation of integral membrane proteins into the membrane. Involved in integration of membrane proteins that insert both dependently and independently of the Sec translocase complex, as well as at least some lipoproteins. Aids folding of multispanning membrane proteins. The sequence is that of Membrane protein insertase YidC from Geobacter sp. (strain M21).